Here is a 306-residue protein sequence, read N- to C-terminus: MSTTSCRMYENRFPEVDELVVVNVRQIQEMGAYVKLLEYDNIEGMVLLSELSRRRIRSVQKHIRVGRNEVVVVLRVDKEKGYIDLSKRRVSPEDVVKCEERFNKSKAVHSIMRHIAEKHNVPLETMYTTIGWPLYRKYGHAYDAFKLAISNPDHVFEGLEPPKSGVINDLLAQISRRLTPQPIKIRADVEVTCFGYEGINAIKAALKAAEDVHTEEVPIKVKLVAPPLYVLLTNALDKSLGLKKLEEAIGAIEKSITASNGTCTVKMKPKAVSETDELELADLMKKFEKENAEISGDEEDDQSGSE.

The region spanning Asp17–Arg88 is the S1 motif domain. Position 52 is a phosphoserine (Ser52). A Phosphothreonine modification is found at Thr179. Ser273, Ser295, Ser303, and Ser305 each carry phosphoserine.

The protein belongs to the eIF-2-alpha family. As to quaternary structure, eukaryotic translation initiation factor 2 eIF2 is a heterotrimeric complex composed of an alpha, a beta and a gamma subunit.

It is found in the cytoplasm. The protein localises to the cytosol. In terms of biological role, eIF-2 functions in the early steps of protein synthesis by forming a ternary complex with GTP and initiator tRNA. This complex binds to a 40S ribosomal subunit, followed by mRNA binding to form a 43S pre-initiation complex. Junction of the 60S ribosomal subunit to form the 80S initiation complex is preceded by hydrolysis of the GTP bound to eIF-2 and release of an eIF-2-GDP binary complex. In order for eIF-2 to recycle and catalyze another round of initiation, the GDP bound to eIF-2 must exchange with GTP by way of a reaction catalyzed by eIF2B. The chain is Eukaryotic translation initiation factor 2 subunit alpha (tif211) from Schizosaccharomyces pombe (strain 972 / ATCC 24843) (Fission yeast).